A 230-amino-acid chain; its full sequence is N-(5'-phosphoribosyl)anthranilate isomerase (230 aa).

It belongs to the TrpF family.

The catalysed reaction is N-(5-phospho-beta-D-ribosyl)anthranilate = 1-(2-carboxyphenylamino)-1-deoxy-D-ribulose 5-phosphate. It functions in the pathway amino-acid biosynthesis; L-tryptophan biosynthesis; L-tryptophan from chorismate: step 3/5. The polypeptide is N-(5'-phosphoribosyl)anthranilate isomerase (Ralstonia nicotianae (strain ATCC BAA-1114 / GMI1000) (Ralstonia solanacearum)).